The following is a 999-amino-acid chain: Bifunctional glutamine synthetase adenylyltransferase/adenylyl-removing enzyme (999 aa).

The segment at 1–493 (MFVRKPATER…LHAKLFYQPL (493 aa)) is adenylyl removase. The tract at residues 498-999 (GHTALGIGEG…KAVVRKIFGG (502 aa)) is adenylyl transferase.

This sequence belongs to the GlnE family. Mg(2+) is required as a cofactor.

It carries out the reaction [glutamine synthetase]-O(4)-(5'-adenylyl)-L-tyrosine + phosphate = [glutamine synthetase]-L-tyrosine + ADP. It catalyses the reaction [glutamine synthetase]-L-tyrosine + ATP = [glutamine synthetase]-O(4)-(5'-adenylyl)-L-tyrosine + diphosphate. Involved in the regulation of glutamine synthetase GlnA, a key enzyme in the process to assimilate ammonia. When cellular nitrogen levels are high, the C-terminal adenylyl transferase (AT) inactivates GlnA by covalent transfer of an adenylyl group from ATP to specific tyrosine residue of GlnA, thus reducing its activity. Conversely, when nitrogen levels are low, the N-terminal adenylyl removase (AR) activates GlnA by removing the adenylyl group by phosphorolysis, increasing its activity. The regulatory region of GlnE binds the signal transduction protein PII (GlnB) which indicates the nitrogen status of the cell. This chain is Bifunctional glutamine synthetase adenylyltransferase/adenylyl-removing enzyme, found in Mycolicibacterium smegmatis (strain ATCC 700084 / mc(2)155) (Mycobacterium smegmatis).